Reading from the N-terminus, the 716-residue chain is MNDRVRSRTIVSAQSITLPKGGDVHLVPPPPKPCVTIVVHGVNDLAGCYERIERGLCQGLNERLDMPPTLPGGQANPGYLTPAGYSLPADDEGKAENPDVVYYRRKFASGAGGAAVRSVVVPFYWGFREEEQYINKTAAHGEWLDRNGNRLDKSGTKEGGQFVNATTNLPDMWGQGFNGKLFGFISLDWFGGTMTHPLFSAAGRKYMVLAAMRLAMLIKIIRKRYPDDTINVVGHSQGTLLTLLAHAFLKDDGVAPADGVIMLNSPYGLFEPLNEKLQGWSSQQTREARLATLKGILEFICGRRHPVPALSSVALRNCQGYGAIGGPGWVGGQGCQTTIDGERLSFDERDNRGSVYLYFTPQDQTVGLANVQGIGWRGIAEQVKGLPGRTGLPQGFHQRIFTVRKRNGEKEKIGGHAPPHVYPLLLAGEKTWEDTGLGGKDRFGRANFDQGDSVLLTAPRLPLPTEARFDFDGAVTAPGENSASGVYQVRDTLDPIDAAIGVSNGGWKEKDSGHAVAQQVDAALAYRYGRDARSVERALNEGKELAQQTHVFSARELGTGMVLVTRAETPYEARLRLQTAEGHLEPLSFHSAIPNNPEHNRRVLAYDLAIGAGDSVDDVVFYQYLCRVADWRLDWKASDKGIFSQGDASVDLPDEEVRALYRAEESKNSQLIDATVAYRKSGEFPVVVGNRLPSLVGTQTILDRYHEQAVRFGGTI.

Residues 68–87 (PTLPGGQANPGYLTPAGYSL) are disordered.

In terms of assembly, interacts in the cytoplasm with the adapter protein Tla3. Interacts in the periplasm with the immunity protein Tli3.

It is found in the secreted. The protein localises to the host periplasm. Its activity is regulated as follows. Neutralized by the immunity protein Tli3 in the periplasm of P.aeruginosa cells. In terms of biological role, antibacterial effector. Is toxic once delivered in the periplasm of prey bacteria. This chain is Antibacterial effector protein Tle3, found in Pseudomonas aeruginosa (strain ATCC 15692 / DSM 22644 / CIP 104116 / JCM 14847 / LMG 12228 / 1C / PRS 101 / PAO1).